The chain runs to 394 residues: Myb-related protein 2 (394 aa).

In terms of domain architecture, HTH myb-type spans 42 to 102 (TDAKPRLKWT…HLQKYRLSKN (61 aa)). Positions 73 to 98 (PKTIMKVMGIPGLTLYHLKSHLQKYR) form a DNA-binding region, H-T-H motif. The coiled coil stretch occupies residues 148–168 (GEALQMQIEVQRRLHEQLEVQ). Positions 161-166 (LHEQLE) match the LHEQLE motif. The tract at residues 338–363 (LHGHKSQHQQGNNEDHKLETRNRKGM) is disordered. The span at 350-363 (NEDHKLETRNRKGM) shows a compositional bias: basic and acidic residues.

This sequence belongs to the MYB-CC family. Isoform 1: Homodimer. Isoform 3: Does not form homodimer. Expressed in phloem and/or cambium.

The protein resides in the nucleus. Functionally, transcriptional activator that may activate the transcription of specific genes involved in nitrogen uptake or assimilation. Acts redundantly with MYR1 as a repressor of flowering and organ elongation under decreased light intensity. Represses gibberellic acid (GA)-dependent responses and affects levels of bioactive GA. The chain is Myb-related protein 2 from Arabidopsis thaliana (Mouse-ear cress).